Here is an 865-residue protein sequence, read N- to C-terminus: Bifunctional uridylyltransferase/uridylyl-removing enzyme (865 aa).

Residues Met1–Leu318 form a uridylyltransferase region. Residues Ile319–Leu675 are uridylyl-removing. The HD domain occupies Val437–Leu559. 2 consecutive ACT domains span residues Gln676–His762 and Arg789–Ala865. Residues Asp747–Arg767 form a disordered region. A compositionally biased stretch (basic residues) spans Ala751–Arg767.

This sequence belongs to the GlnD family. Mg(2+) serves as cofactor.

The enzyme catalyses [protein-PII]-L-tyrosine + UTP = [protein-PII]-uridylyl-L-tyrosine + diphosphate. It catalyses the reaction [protein-PII]-uridylyl-L-tyrosine + H2O = [protein-PII]-L-tyrosine + UMP + H(+). Its activity is regulated as follows. Uridylyltransferase (UTase) activity is inhibited by glutamine, while glutamine activates uridylyl-removing (UR) activity. In terms of biological role, modifies, by uridylylation and deuridylylation, the PII regulatory proteins (GlnB and homologs), in response to the nitrogen status of the cell that GlnD senses through the glutamine level. Under low glutamine levels, catalyzes the conversion of the PII proteins and UTP to PII-UMP and PPi, while under higher glutamine levels, GlnD hydrolyzes PII-UMP to PII and UMP (deuridylylation). Thus, controls uridylylation state and activity of the PII proteins, and plays an important role in the regulation of nitrogen assimilation and metabolism. This Bordetella bronchiseptica (strain ATCC BAA-588 / NCTC 13252 / RB50) (Alcaligenes bronchisepticus) protein is Bifunctional uridylyltransferase/uridylyl-removing enzyme.